The chain runs to 177 residues: Parathyroid hormone-related protein (177 aa).

The first 24 residues, Met-1–Gly-24, serve as a signal peptide directing secretion. A propeptide spanning residues Arg-25–Leu-34 is cleaved from the precursor. The tract at residues Arg-57 to His-68 is important for receptor binding. The tract at residues Ala-74–Thr-149 is disordered. Residues Ser-76 to Asn-90 show a composition bias toward polar residues. Positions Thr-108–Lys-129 match the Nuclear localization signal motif. Positions Asn-109–Pro-118 are enriched in basic and acidic residues. The segment covering Pro-122–Lys-132 has biased composition (basic residues).

This sequence belongs to the parathyroid hormone family. In terms of assembly, PTHrP interacts with PTH1R (via N-terminal extracellular domain). There are several secretory forms, including osteostatin, arising from endoproteolytic cleavage of the initial translation product. Each of these secretory forms is believed to have one or more of its own receptors that mediates the normal paracrine, autocrine and endocrine actions.

The protein resides in the secreted. It is found in the cytoplasm. The protein localises to the nucleus. Functionally, neuroendocrine peptide which is a critical regulator of cellular and organ growth, development, migration, differentiation and survival and of epithelial calcium ion transport. Acts by binding to its receptor, PTH1R, activating G protein-coupled receptor signaling. Regulates endochondral bone development and epithelial-mesenchymal interactions during the formation of the mammary glands and teeth. Required for skeletal homeostasis. Promotes mammary mesenchyme differentiation and bud outgrowth by modulating mesenchymal cell responsiveness to BMPs. Up-regulates BMPR1A expression in the mammary mesenchyme and this increases the sensitivity of these cells to BMPs and allows them to respond to BMP4 in a paracrine and/or autocrine fashion. BMP4 signaling in the mesenchyme, in turn, triggers epithelial outgrowth and augments MSX2 expression, which causes the mammary mesenchyme to inhibit hair follicle formation within the nipple sheath. Potent inhibitor of osteoclastic bone resorption. The sequence is that of Parathyroid hormone-related protein (PTHLH) from Bos taurus (Bovine).